The sequence spans 290 residues: Arginine N-acetyltransferase avaD (290 aa).

Residue 157-163 coordinates acetyl-CoA; that stretch reads NQAHFEA.

The protein belongs to the acetyltransferase family. GCN5 subfamily.

It functions in the pathway secondary metabolite metabolism. Functionally, arginine N-acetyltransferase; part of the cluster that mediates the biosynthesis of a highly modified cyclo-arginine-tryptophan dipeptide (cRW). Within the pathway, avaD catalyzes the N-acetylation of the guanidine group. The first step of the pathway is perfornmed by the arginine-containing cyclodipeptide synthase (RCPDS) avaA that acts as the scaffold-generating enzyme and is responsible for formation of the cyclo-Arg-Trp (cRW) diketopiperazine. AvaB then acts as a multifunctional flavoenzyme that is responsible for generating the cyclo-Arg-formylkynurenine DKP, which can be deformylated by avaC. AvaB then further catalyzes an additional N-oxidation followed by cyclization and dehydration. The next step is an N-acetylation of the guanidine group catalyzed by the arginine N-acetyltransferase avaD. The roles of the additional enzymes identified within the ava cluster still have to be determined. The chain is Arginine N-acetyltransferase avaD from Aspergillus versicolor.